Here is a 138-residue protein sequence, read N- to C-terminus: ATP synthase epsilon chain 2 (138 aa).

The protein belongs to the ATPase epsilon chain family. In terms of assembly, F-type ATPases have 2 components, CF(1) - the catalytic core - and CF(0) - the membrane proton channel. CF(1) has five subunits: alpha(3), beta(3), gamma(1), delta(1), epsilon(1). CF(0) has three main subunits: a, b and c.

The protein localises to the cell inner membrane. In terms of biological role, produces ATP from ADP in the presence of a proton gradient across the membrane. This chain is ATP synthase epsilon chain 2, found in Syntrophotalea carbinolica (strain DSM 2380 / NBRC 103641 / GraBd1) (Pelobacter carbinolicus).